An 89-amino-acid polypeptide reads, in one-letter code: Large ribosomal subunit protein bL27 (89 aa).

Residues 1–20 (MAHKKAGGSSRNGRDSESKR) form a disordered region.

Belongs to the bacterial ribosomal protein bL27 family.

This chain is Large ribosomal subunit protein bL27, found in Bartonella bacilliformis (strain ATCC 35685 / KC583 / Herrer 020/F12,63).